The primary structure comprises 590 residues: MKKYPKIGIRPTIDGRQGGVRESLEEKTMNLAKAVAELITSNLKNGDGTPVECVIADGTIGRVAESAACAEKFEREGVGATITVTSCWCYGAETMDMNPYYPKAVWGFNGTERPGAVYLAAVLAGHAQKGLPAFGIYGRDVQDLNDNSIPADVAEKILRFARAAQAVATMRGKSYLSMGSVSMGIAGSIVNPDFFQEYLGMRNESIDLTEIIRRMAEGIYDKEEYAKAMAWTEKYCKKNEGNDFNIPEKTKTRAQKDEDWEFIVKMTIIMRDLMQGNPKLKELGFKEEALGHNAIAAGFQGQRQWTDFYPNGDFSEALLNTSFDWNGIREAFVVTTENDACNGVAMLFGHLLTNRAQIFSDVRTYWSPEAVKRVTGKELTGMAANGIIHLINSGATTLDGTGQQTNANGEPAMKPCWEITEGEVEKCLEATTWYPANRDYFRGGGFSSNFLSKGGMPVTMMRLNLIKGLGPVLQIAEGWTVEIDPEIHKLLDERTDRTWPTTWFVPRLCDKPAFKDVYSVMNNWGANHGAISYGHIGQDVITLASMLRIPVCMHNVEEDQIFRPAAWNAFGMDKEGADYRACTTYGPIYK.

Catalysis depends on proton acceptor residues E337 and D361. Mn(2+)-binding residues include E337, D361, and H528.

Belongs to the L-fucose isomerase family. Mn(2+) is required as a cofactor.

It localises to the cytoplasm. It carries out the reaction L-fucose = L-fuculose. It functions in the pathway carbohydrate degradation; L-fucose degradation; L-lactaldehyde and glycerone phosphate from L-fucose: step 1/3. Converts the aldose L-fucose into the corresponding ketose L-fuculose. This chain is L-fucose isomerase, found in Bacteroides fragilis (strain ATCC 25285 / DSM 2151 / CCUG 4856 / JCM 11019 / LMG 10263 / NCTC 9343 / Onslow / VPI 2553 / EN-2).